Consider the following 126-residue polypeptide: Small ribosomal subunit protein uS12 (126 aa).

Asp89 carries the 3-methylthioaspartic acid modification.

The protein belongs to the universal ribosomal protein uS12 family. In terms of assembly, part of the 30S ribosomal subunit. Contacts proteins S8 and S17. May interact with IF1 in the 30S initiation complex.

Its function is as follows. With S4 and S5 plays an important role in translational accuracy. In terms of biological role, interacts with and stabilizes bases of the 16S rRNA that are involved in tRNA selection in the A site and with the mRNA backbone. Located at the interface of the 30S and 50S subunits, it traverses the body of the 30S subunit contacting proteins on the other side and probably holding the rRNA structure together. The combined cluster of proteins S8, S12 and S17 appears to hold together the shoulder and platform of the 30S subunit. This chain is Small ribosomal subunit protein uS12, found in Sulfurimonas denitrificans (strain ATCC 33889 / DSM 1251) (Thiomicrospira denitrificans (strain ATCC 33889 / DSM 1251)).